The following is a 458-amino-acid chain: GDP-fucose protein O-fucosyltransferase 3 (458 aa).

The Cytoplasmic segment spans residues 1–11 (MRRISVKKLCS). The helical; Signal-anchor for type II membrane protein transmembrane segment at 12–32 (FCLCACAFAFLVMTFQVIELL) threads the bilayer. Residues 33 to 458 (GQFEQTEHRQ…TQFWREVFTD (426 aa)) lie on the Lumenal side of the membrane. N-linked (GlcNAc...) asparagine glycosylation is found at Asn-92, Asn-150, and Asn-300. An intrachain disulfide couples Cys-371 to Cys-374. N-linked (GlcNAc...) asparagine glycosylation is present at Asn-445.

Belongs to the glycosyltransferase 10 family.

Its subcellular location is the endoplasmic reticulum membrane. It catalyses the reaction L-threonyl-[protein] + GDP-beta-L-fucose = 3-O-(alpha-L-fucosyl)-L-threonyl-[protein] + GDP + H(+). The enzyme catalyses L-seryl-[protein] + GDP-beta-L-fucose = 3-O-(alpha-L-fucosyl)-L-seryl-[protein] + GDP + H(+). Its pathway is protein modification; protein glycosylation. Functionally, protein O-fucosyltransferase that specifically catalyzes O-fucosylation of serine or threonine residues in EMI domains of target proteins. Attaches fucose through an O-glycosidic linkage. O-fucosylation of EMI domain-containing proteins may be required for facilitating protein folding and secretion. This chain is GDP-fucose protein O-fucosyltransferase 3 (fut10), found in Danio rerio (Zebrafish).